The following is a 254-amino-acid chain: MVSWIISRLVVLIFGTLYPAYSSYKAVKTKNVKEYVKWMMYWIVFAFFTTAETLTDIVLSWFPFYFELKIAFVIWLLSPYTKGSSVLYRKFVHPTLSNKEKEIDEYITQARDKSYETMMRVGKRGLNLAANAAVTAAAKGQGVLSEKLRSFSMQDLTLIRDEDALPLQGPDGRLRASPGSLLDTIEDLGDDPTLSVRSGTNQADPRTEISEDDTGDKAPKRVKPIKKVPKPEPPASKTLKTRPKKKTSAGGDSA.

2 helical membrane-spanning segments follow: residues 1 to 21 and 35 to 55; these read MVSW…YPAY and YVKW…ETLT. Ser152 is modified (phosphoserine). The disordered stretch occupies residues 164 to 254; that stretch reads ALPLQGPDGR…KKTSAGGDSA (91 aa). Residues 195–204 show a composition bias toward polar residues; the sequence is SVRSGTNQAD. Residues 205–219 show a composition bias toward basic and acidic residues; that stretch reads PRTEISEDDTGDKAP.

It belongs to the DP1 family. Interacts with odorant receptor proteins.

It is found in the membrane. Functionally, required for endoplasmic reticulum (ER) network formation, shaping and remodeling. May enhance the cell surface expression of odorant receptors. This Bos taurus (Bovine) protein is Receptor expression-enhancing protein 2 (REEP2).